The following is a 246-amino-acid chain: Chemokine-binding protein (246 aa).

Positions 108 to 125 (SESSDGNTVNTRLSSVSP) are enriched in polar residues. The segment at 108-132 (SESSDGNTVNTRLSSVSPGQGKDSP) is disordered.

Belongs to the orthopoxvirus OPG001 family.

The protein resides in the secreted. Its function is as follows. Inhibits host immune defense by binding to host chemokines. Binds host CC chemokines (beta chemokines) such as RANTES with high affinity, but not CXC or C chemokines (alpha and gamma chemokines). This Monkeypox virus protein is Chemokine-binding protein (OPG001).